A 234-amino-acid polypeptide reads, in one-letter code: UPF0502 protein Bphy_5360 (234 aa).

It belongs to the UPF0502 family.

This chain is UPF0502 protein Bphy_5360, found in Paraburkholderia phymatum (strain DSM 17167 / CIP 108236 / LMG 21445 / STM815) (Burkholderia phymatum).